Reading from the N-terminus, the 573-residue chain is Proline--tRNA ligase (573 aa).

This sequence belongs to the class-II aminoacyl-tRNA synthetase family. ProS type 1 subfamily. In terms of assembly, homodimer.

Its subcellular location is the cytoplasm. The enzyme catalyses tRNA(Pro) + L-proline + ATP = L-prolyl-tRNA(Pro) + AMP + diphosphate. Its function is as follows. Catalyzes the attachment of proline to tRNA(Pro) in a two-step reaction: proline is first activated by ATP to form Pro-AMP and then transferred to the acceptor end of tRNA(Pro). As ProRS can inadvertently accommodate and process non-cognate amino acids such as alanine and cysteine, to avoid such errors it has two additional distinct editing activities against alanine. One activity is designated as 'pretransfer' editing and involves the tRNA(Pro)-independent hydrolysis of activated Ala-AMP. The other activity is designated 'posttransfer' editing and involves deacylation of mischarged Ala-tRNA(Pro). The misacylated Cys-tRNA(Pro) is not edited by ProRS. This Caldanaerobacter subterraneus subsp. tengcongensis (strain DSM 15242 / JCM 11007 / NBRC 100824 / MB4) (Thermoanaerobacter tengcongensis) protein is Proline--tRNA ligase.